The chain runs to 235 residues: Putative cobalt transport protein CbiM 2 (235 aa).

7 consecutive transmembrane segments (helical) span residues 8–28 (LPAI…AYGV), 40–60 (GILP…SLKM), 74–94 (GIGA…IVLI), 107–127 (TLGA…YLIY), 135–155 (LNFY…TYIV), 160–180 (LALA…SSFS), and 185–205 (IFAI…ALLF).

This sequence belongs to the CbiM family. In terms of assembly, forms an energy-coupling factor (ECF) transporter complex composed of an ATP-binding protein (A component, CbiO), a transmembrane protein (T component, CbiQ) and 2 possible substrate-capture proteins (S components, CbiM and CbiN) of unknown stoichimetry.

It is found in the cell membrane. It participates in cofactor biosynthesis; adenosylcobalamin biosynthesis. In terms of biological role, part of the energy-coupling factor (ECF) transporter complex CbiMNOQ involved in cobalt import. This chain is Putative cobalt transport protein CbiM 2, found in Methanosarcina barkeri (strain Fusaro / DSM 804).